We begin with the raw amino-acid sequence, 366 residues long: MTTTGIIAEFNPFHNGHKYLLDQAHGLKIVAMSGNFVQRGEPAIIDKWTRAQMALENGADLVVELPFLVAVQSADYFASGAVDILAKLGIDTLAFGTETALDYNGLSTIYGKMAEQMSEFLTTLPEKLSYPQKTQLMWEKFAGVQFTGDTPNHILALAYAKACAGRNIRLRPIQRRGADYHSTEKTVAYASATSLRHHRQDPAFVAKSMPNANLFQTSPQVTWEDYFTLLQYQVLTQPDLTQLFQVNEELAIRIKKAIRQVTSFDQLVETVATKRYTKARVRRILIYILIGARETSLPQDVHILGFTAAGRTHLSHIKNKTRIISRIGSQPWDALTQQADQVYQLGNPKIAEQTWGRVPIRIDNTV.

ATP-binding positions include 7 to 20 (IAEF…HKYL), Gly96, Asn152, and Arg175.

This sequence belongs to the TmcAL family.

Its subcellular location is the cytoplasm. The enzyme catalyses cytidine(34) in elongator tRNA(Met) + acetate + ATP = N(4)-acetylcytidine(34) in elongator tRNA(Met) + AMP + diphosphate. In terms of biological role, catalyzes the formation of N(4)-acetylcytidine (ac(4)C) at the wobble position of elongator tRNA(Met), using acetate and ATP as substrates. First activates an acetate ion to form acetyladenylate (Ac-AMP) and then transfers the acetyl group to tRNA to form ac(4)C34. In Streptococcus mutans serotype c (strain ATCC 700610 / UA159), this protein is tRNA(Met) cytidine acetate ligase.